The primary structure comprises 356 residues: UDP-3-O-acylglucosamine N-acyltransferase (356 aa).

His251 acts as the Proton acceptor in catalysis.

The protein belongs to the transferase hexapeptide repeat family. LpxD subfamily. As to quaternary structure, homotrimer.

The enzyme catalyses a UDP-3-O-[(3R)-3-hydroxyacyl]-alpha-D-glucosamine + a (3R)-hydroxyacyl-[ACP] = a UDP-2-N,3-O-bis[(3R)-3-hydroxyacyl]-alpha-D-glucosamine + holo-[ACP] + H(+). The protein operates within bacterial outer membrane biogenesis; LPS lipid A biosynthesis. Its function is as follows. Catalyzes the N-acylation of UDP-3-O-acylglucosamine using 3-hydroxyacyl-ACP as the acyl donor. Is involved in the biosynthesis of lipid A, a phosphorylated glycolipid that anchors the lipopolysaccharide to the outer membrane of the cell. The polypeptide is UDP-3-O-acylglucosamine N-acyltransferase (Ralstonia nicotianae (strain ATCC BAA-1114 / GMI1000) (Ralstonia solanacearum)).